A 473-amino-acid polypeptide reads, in one-letter code: Spliceosome-associated protein CWC27 homolog (473 aa).

Ser2 carries the post-translational modification N-acetylserine. The PPIase cyclophilin-type domain occupies 11–166; that stretch reads TNGKVLLKTT…NSHKIRSCEV (156 aa). A compositionally biased stretch (basic and acidic residues) spans 178 to 193; the sequence is EIKKPKKEKPEEEVKK. 3 disordered regions span residues 178–197, 203–383, and 401–473; these read EIKKPKKEKPEEEVKKLKPK, SLLS…TSRE, and IAET…KERR. A coiled-coil region spans residues 206–230; it reads SFGEEAEEEEEEVNRVSQSMKGKSK. Basic and acidic residues predominate over residues 231–241; it reads SSHDLLKDDPH. The Cell attachment site signature appears at 252 to 254; sequence RGD. Over residues 256–266 the composition is skewed to acidic residues; sequence AEDSDDDGEYE. Basic and acidic residues-rich tracts occupy residues 267 to 348 and 360 to 372; these read GAEH…KRSE and EYRREKQKYEALR. Positions 311–378 form a coiled coil; it reads VSRSEELRKE…EALRKQQAKT (68 aa). Residue Ser347 is modified to Phosphoserine. Residues 405 to 419 show a composition bias toward acidic residues; it reads PENDISETEVEDDEG. Basic and acidic residues-rich tracts occupy residues 426-438 and 458-473; these read QFEDKSRKVKDAS and RREESKKLMREKKERR.

Belongs to the cyclophilin-type PPIase family. In terms of assembly, part of the activated spliceosome B/catalytic step 1 spliceosome, one of the forms of the spliceosome which has a well-formed active site but still cannot catalyze the branching reaction and is composed at least of 52 proteins, the U2, U5 and U6 snRNAs and the pre-mRNA. Recruited during early steps of activated spliceosome B maturation, it is probably one of the first proteins released from this complex as he matures to the spliceosome C complex. Component of the minor spliceosome, which splices U12-type introns.

The protein resides in the nucleus. Functionally, as part of the spliceosome, plays a role in pre-mRNA splicing. Probable inactive PPIase with no peptidyl-prolyl cis-trans isomerase activity. As a component of the minor spliceosome, involved in the splicing of U12-type introns in pre-mRNAs. This is Spliceosome-associated protein CWC27 homolog from Bos taurus (Bovine).